Here is a 244-residue protein sequence, read N- to C-terminus: Leucyl/phenylalanyl-tRNA--protein transferase (244 aa).

This sequence belongs to the L/F-transferase family.

The protein resides in the cytoplasm. The catalysed reaction is N-terminal L-lysyl-[protein] + L-leucyl-tRNA(Leu) = N-terminal L-leucyl-L-lysyl-[protein] + tRNA(Leu) + H(+). It catalyses the reaction N-terminal L-arginyl-[protein] + L-leucyl-tRNA(Leu) = N-terminal L-leucyl-L-arginyl-[protein] + tRNA(Leu) + H(+). It carries out the reaction L-phenylalanyl-tRNA(Phe) + an N-terminal L-alpha-aminoacyl-[protein] = an N-terminal L-phenylalanyl-L-alpha-aminoacyl-[protein] + tRNA(Phe). Functionally, functions in the N-end rule pathway of protein degradation where it conjugates Leu, Phe and, less efficiently, Met from aminoacyl-tRNAs to the N-termini of proteins containing an N-terminal arginine or lysine. The polypeptide is Leucyl/phenylalanyl-tRNA--protein transferase (Thermodesulfovibrio yellowstonii (strain ATCC 51303 / DSM 11347 / YP87)).